A 214-amino-acid polypeptide reads, in one-letter code: Ras-like protein rasZ (214 aa).

GTP is bound at residue 16–23; it reads GDGGVGKT. The Effector region motif lies at 38 to 46; the sequence is YDPTIEDSY. Residues 63 to 67 and 122 to 125 contribute to the GTP site; these read DTAGQ and NKSD. Cys-211 carries the post-translational modification Cysteine methyl ester. Cys-211 is lipidated: S-geranylgeranyl cysteine. A propeptide spans 212–214 (removed in mature form); the sequence is KMM.

It belongs to the small GTPase superfamily. Ras family.

Its subcellular location is the cell membrane. It carries out the reaction GTP + H2O = GDP + phosphate + H(+). In terms of biological role, ras proteins bind GDP/GTP and possess intrinsic GTPase activity. This is Ras-like protein rasZ (rasZ) from Dictyostelium discoideum (Social amoeba).